Reading from the N-terminus, the 454-residue chain is Epoxide hydrolase 1 (454 aa).

A helical membrane pass occupies residues 1 to 21 (MWLEILLASVLGFVIYWFVSK). At 22 to 454 (DKEETLLLGD…RKFMGLLEQQ (433 aa)) the chain is on the cytoplasmic side. The Nucleophile role is filled by aspartate 226. Arginine 294 carries the post-translational modification Dimethylated arginine. Tyrosine 373 functions as the Proton donor in the catalytic mechanism. The active-site Proton acceptor is the histidine 430.

It belongs to the peptidase S33 family.

Its subcellular location is the microsome membrane. The protein localises to the endoplasmic reticulum membrane. It carries out the reaction cis-stilbene oxide + H2O = (1R,2R)-hydrobenzoin. The catalysed reaction is 1-(4-methoxyphenyl)-N-methyl-N-[(3-methyloxetan-3-yl)methyl]methanamine + H2O = 2-{[(4-methoxybenzyl)(methyl)amino]methyl}-2-methylpropane-1,3-diol. The enzyme catalyses 8,9-epoxy-(5Z,11Z,14Z)-eicosatrienoate + H2O = 8,9-dihydroxy-(5Z,11Z,14Z)-eicosatrienoate. It catalyses the reaction 11,12-epoxy-(5Z,8Z,14Z)-eicosatrienoate + H2O = 11,12-dihydroxy-(5Z,8Z,14Z)-eicosatrienoate. It carries out the reaction 2-(5Z,8Z,11Z,14Z-eicosatetraenoyl)-glycerol + H2O = glycerol + (5Z,8Z,11Z,14Z)-eicosatetraenoate + H(+). With respect to regulation, inhibited by 10-hydroxystearamide and methoxy-arachidonyl fluorophosphate. Its function is as follows. Biotransformation enzyme that catalyzes the hydrolysis of arene and aliphatic epoxides to less reactive and more water soluble dihydrodiols by the trans addition of water. May play a role in the metabolism of endogenous lipids such as epoxide-containing fatty acids. Metabolizes the abundant endocannabinoid 2-arachidonoylglycerol (2-AG) to free arachidonic acid (AA) and glycerol. Binds 20(S)-hydroxycholesterol (20(S)-OHC). This is Epoxide hydrolase 1 (EPHX1) from Sus scrofa (Pig).